Consider the following 462-residue polypeptide: Metal cation symporter ZIP8 (462 aa).

The first 19 residues, Met1–Gly19, serve as a signal peptide directing secretion. Topologically, residues Arg20 to Gly132 are extracellular. N-linked (GlcNAc...) asparagine glycosylation is found at Asn40, Asn88, and Asn96. Residues Phe133–Ile153 traverse the membrane as a helical segment. Residues Lys154–Lys160 are Cytoplasmic-facing. A helical membrane pass occupies residues Ile161–Leu181. The Extracellular segment spans residues Ile182–Lys191. The helical transmembrane segment at Ile192–Val212 threads the bilayer. Over Glu213–Ala367 the chain is Cytoplasmic. Positions Glu345–Glu350 match the XEXPHE-motif motif. The chain crosses the membrane as a helical span at residues Leu368–Val388. Residues Gly389–Asn390 are Extracellular-facing. The chain crosses the membrane as a helical span at residues Asn391–Ala411. Residues Asp412 to Asp431 lie on the Cytoplasmic side of the membrane. Residues Phe432–Ile452 form a helical membrane-spanning segment. The Extracellular portion of the chain corresponds to Thr453–Gln462.

Belongs to the ZIP transporter (TC 2.A.5) family. As to quaternary structure, homodimer. Post-translationally, N-glycosylated. N-glycosylation is not required for proper iron and zinc transport.

It localises to the cell membrane. It is found in the lysosome membrane. The protein localises to the apical cell membrane. Its subcellular location is the basolateral cell membrane. It catalyses the reaction Zn(2+)(out) + 2 hydrogencarbonate(out) = Zn(2+)(in) + 2 hydrogencarbonate(in). The catalysed reaction is selenite(out) + Zn(2+)(out) + hydrogencarbonate(out) = selenite(in) + Zn(2+)(in) + hydrogencarbonate(in). The enzyme catalyses Mn(2+)(out) + 2 hydrogencarbonate(out) = Mn(2+)(in) + 2 hydrogencarbonate(in). It carries out the reaction Fe(2+)(out) + 2 hydrogencarbonate(out) = Fe(2+)(in) + 2 hydrogencarbonate(in). It catalyses the reaction Cd(2+)(out) + 2 hydrogencarbonate(out) = Cd(2+)(in) + 2 hydrogencarbonate(in). The catalysed reaction is Co(2+)(out) + 2 hydrogencarbonate(out) = Co(2+)(in) + 2 hydrogencarbonate(in). Functionally, electroneutral divalent metal cation:bicarbonate symporter of the plasma membrane mediating the cellular uptake of zinc and manganese, two divalent metal cations important for development, tissue homeostasis and immunity. Transports an electroneutral complex composed of a divalent metal cation and two bicarbonate anions or alternatively a bicarbonate and a selenite anion. Thereby, it also contributes to the cellular uptake of selenium, an essential trace metal and micronutrient. Also imports cadmium a non-essential metal which is cytotoxic and carcinogenic. May also transport iron and cobalt through membranes. Through zinc import, indirectly regulates the metal-dependent transcription factor MTF1 and the expression of some metalloproteases involved in cartilage catabolism and also probably heart development. Also indirectly regulates the expression of proteins involved in cell morphology and cytoskeleton organization. Indirectly controls innate immune function and inflammatory response by regulating zinc cellular uptake which in turn modulates the expression of genes specific of these processes. Protects, for instance, cells from injury and death at the onset of inflammation. By regulating zinc influx into monocytes also directly modulates their adhesion to endothelial cells and arteries. Reclaims manganese from the bile at the apical membrane of hepatocytes, thereby regulating the activity of the manganese-dependent enzymes through the systemic levels of the nutrient. Also participates in manganese reabsorption in the proximal tubule of the kidney. By mediating the extracellular uptake of manganese by cells of the blood-brain barrier, may also play a role in the transport of the micronutrient to the brain. With manganese cellular uptake also participates in mitochondrial proper function. Finally, also probably functions intracellularly, translocating zinc from lysosome to cytosol to indirectly enhance the expression of specific genes during TCR-mediated T cell activation. The polypeptide is Metal cation symporter ZIP8 (Rattus norvegicus (Rat)).